The chain runs to 105 residues: Large ribosomal subunit protein uL24 (105 aa).

It belongs to the universal ribosomal protein uL24 family. Part of the 50S ribosomal subunit.

One of two assembly initiator proteins, it binds directly to the 5'-end of the 23S rRNA, where it nucleates assembly of the 50S subunit. In terms of biological role, one of the proteins that surrounds the polypeptide exit tunnel on the outside of the subunit. The protein is Large ribosomal subunit protein uL24 of Dictyoglomus thermophilum (strain ATCC 35947 / DSM 3960 / H-6-12).